The sequence spans 688 residues: DNA topoisomerase 1 (688 aa).

The region spanning 3–113 (ENLVIVESPA…TENRVVFNEI (111 aa)) is the Toprim domain. Mg(2+)-binding residues include glutamate 9 and aspartate 82. The 428-residue stretch at 129–556 (EMELVDAQQA…FYSSFKQDVE (428 aa)) folds into the Topo IA-type catalytic domain. Positions 163–168 (SAGRVQ) are interaction with DNA. The active-site O-(5'-phospho-DNA)-tyrosine intermediate is tyrosine 298. Residues 322–349 (YGNDYTSNRKSKGQGDQDAHEAIRPSST) form a disordered region. Over residues 334–344 (GQGDQDAHEAI) the composition is skewed to basic and acidic residues. 3 C4-type zinc fingers span residues 576–602 (CEVC…FPDC), 616–644 (CPKC…YPEC), and 657–680 (CPKC…CSNC).

The protein belongs to the type IA topoisomerase family. Monomer. Mg(2+) is required as a cofactor.

It catalyses the reaction ATP-independent breakage of single-stranded DNA, followed by passage and rejoining.. Its function is as follows. Releases the supercoiling and torsional tension of DNA, which is introduced during the DNA replication and transcription, by transiently cleaving and rejoining one strand of the DNA duplex. Introduces a single-strand break via transesterification at a target site in duplex DNA. The scissile phosphodiester is attacked by the catalytic tyrosine of the enzyme, resulting in the formation of a DNA-(5'-phosphotyrosyl)-enzyme intermediate and the expulsion of a 3'-OH DNA strand. The free DNA strand then undergoes passage around the unbroken strand, thus removing DNA supercoils. Finally, in the religation step, the DNA 3'-OH attacks the covalent intermediate to expel the active-site tyrosine and restore the DNA phosphodiester backbone. In Staphylococcus saprophyticus subsp. saprophyticus (strain ATCC 15305 / DSM 20229 / NCIMB 8711 / NCTC 7292 / S-41), this protein is DNA topoisomerase 1.